A 153-amino-acid chain; its full sequence is ORM1-like protein 3 (153 aa).

Residues 1-17 (MNVGTAHSEVNPNTRVM) are important for ceramide level-sensing. At 1 to 21 (MNVGTAHSEVNPNTRVMNSRG) the chain is on the cytoplasmic side. The next 2 helical transmembrane spans lie at 22–44 (IWLS…PFVS) and 45–63 (VPVV…MYIF). Residues 64-100 (LHTVKGTPFETPDQGKARLLTHWEQMDYGVQFTASRK) are Cytoplasmic-facing. Residues 101 to 117 (FLTITPIVLYFLTSFYT) traverse the membrane as a helical segment. Topologically, residues 118 to 121 (KYDQ) are lumenal. A helical membrane pass occupies residues 122–139 (IHFVLNTVSLMSVLIPKL). Pro137 is subject to Hydroxyproline. Over 140-153 (PQLHGVRIFGINKY) the chain is Cytoplasmic.

It belongs to the ORM family. As to quaternary structure, ceramide-sensitive subunit of the serine palmitoyltransferase (SPT) complex, which is also composed of SPTLC1, SPTLC2/3 and SPTSSA/B. In terms of processing, when hydroxylated at Pro-137, ubiquitinated via 'Lys-48'-linkage, leading to proteasomal degradation. In endothelial cells, ORMDL3 proteasomal degradation is controlled by the sphingosine 1-phosphate receptor signaling pathway. In terms of tissue distribution, widely expressed. Expressed in adult and fetal heart, brain, lung, liver, skeletal muscle and kidney. Expressed in adult pancreas and placenta and in fetal spleen and thymus.

Its subcellular location is the endoplasmic reticulum membrane. In terms of biological role, plays an essential role in the homeostatic regulation of sphingolipid de novo biosynthesis by modulating the activity of the serine palmitoyltransferase (SPT) in response to ceramide levels. When complexed to SPT, the binding of ceramides to its N-terminus stabilizes a conformation that block SPT substrate entry, hence preventing SPT catalytic activity. Through this mechanism, maintains ceramide levels at sufficient concentrations for the production of complex sphingolipids, but which prevents the accumulation of ceramides to levels that trigger apoptosis. This Homo sapiens (Human) protein is ORM1-like protein 3 (ORMDL3).